Here is a 305-residue protein sequence, read N- to C-terminus: uncharacterized protein (305 aa).

The N-terminal stretch at 1–29 (MKKWFSSISKKKVSFSTLLLLGSGIVLSS) is a signal peptide. The N-palmitoyl cysteine moiety is linked to residue C30. C30 carries S-diacylglycerol cysteine lipidation. The interval 234–265 (FYNPDNSNGSNAPGSNQPNQDSGNNGSTTPAA) is disordered. Over residues 237–258 (PDNSNGSNAPGSNQPNQDSGNN) the composition is skewed to polar residues.

The protein localises to the cell membrane. This is an uncharacterized protein from Mycoplasma pneumoniae (strain ATCC 29342 / M129 / Subtype 1) (Mycoplasmoides pneumoniae).